We begin with the raw amino-acid sequence, 700 residues long: Polyribonucleotide nucleotidyltransferase (700 aa).

Mg(2+)-binding residues include aspartate 486 and aspartate 492. One can recognise a KH domain in the interval 554 to 613; the sequence is PKIISTTINPDKIREVIGPGGKMINKIIDETGVKIDINDDGRVYIFSSDIQAGKRARSMI. An S1 motif domain is found at 623-691; sequence GQVFLGRVIR…KQGRVNLSRK (69 aa).

This sequence belongs to the polyribonucleotide nucleotidyltransferase family. Requires Mg(2+) as cofactor.

The protein resides in the cytoplasm. It carries out the reaction RNA(n+1) + phosphate = RNA(n) + a ribonucleoside 5'-diphosphate. Its function is as follows. Involved in mRNA degradation. Catalyzes the phosphorolysis of single-stranded polyribonucleotides processively in the 3'- to 5'-direction. The polypeptide is Polyribonucleotide nucleotidyltransferase (Acetivibrio thermocellus (strain ATCC 27405 / DSM 1237 / JCM 9322 / NBRC 103400 / NCIMB 10682 / NRRL B-4536 / VPI 7372) (Clostridium thermocellum)).